The primary structure comprises 117 residues: NADH-quinone oxidoreductase subunit A (117 aa).

Transmembrane regions (helical) follow at residues 4-24, 64-84, and 86-106; these read WIGV…GMLT, LMFV…VSFV, and LGLA…LGLW.

The protein belongs to the complex I subunit 3 family. As to quaternary structure, NDH-1 is composed of 14 different subunits. Subunits NuoA, H, J, K, L, M, N constitute the membrane sector of the complex.

It is found in the cell membrane. It carries out the reaction a quinone + NADH + 5 H(+)(in) = a quinol + NAD(+) + 4 H(+)(out). In terms of biological role, NDH-1 shuttles electrons from NADH, via FMN and iron-sulfur (Fe-S) centers, to quinones in the respiratory chain. The immediate electron acceptor for the enzyme in this species is believed to be a menaquinone. Couples the redox reaction to proton translocation (for every two electrons transferred, four hydrogen ions are translocated across the cytoplasmic membrane), and thus conserves the redox energy in a proton gradient. In Desulforamulus reducens (strain ATCC BAA-1160 / DSM 100696 / MI-1) (Desulfotomaculum reducens), this protein is NADH-quinone oxidoreductase subunit A.